The sequence spans 426 residues: Serine--tRNA ligase (426 aa).

229-231 (TAE) is an L-serine binding site. 260–262 (RSE) serves as a coordination point for ATP. Residue Glu-283 participates in L-serine binding. 347-350 (EIAS) is a binding site for ATP. Ser-383 lines the L-serine pocket.

Belongs to the class-II aminoacyl-tRNA synthetase family. Type-1 seryl-tRNA synthetase subfamily. As to quaternary structure, homodimer. The tRNA molecule binds across the dimer.

Its subcellular location is the cytoplasm. It carries out the reaction tRNA(Ser) + L-serine + ATP = L-seryl-tRNA(Ser) + AMP + diphosphate + H(+). The catalysed reaction is tRNA(Sec) + L-serine + ATP = L-seryl-tRNA(Sec) + AMP + diphosphate + H(+). It participates in aminoacyl-tRNA biosynthesis; selenocysteinyl-tRNA(Sec) biosynthesis; L-seryl-tRNA(Sec) from L-serine and tRNA(Sec): step 1/1. Its function is as follows. Catalyzes the attachment of serine to tRNA(Ser). Is also able to aminoacylate tRNA(Sec) with serine, to form the misacylated tRNA L-seryl-tRNA(Sec), which will be further converted into selenocysteinyl-tRNA(Sec). This chain is Serine--tRNA ligase, found in Rickettsia bellii (strain OSU 85-389).